The following is a 706-amino-acid chain: Choline transporter-like protein 2 (706 aa).

Residues 1–33 are Cytoplasmic-facing; that stretch reads MGDERPHYYGKHGTPQKYDPTFKGPIYNRGCTD. Position 14 is a phosphothreonine (threonine 14). The helical transmembrane segment at 34-54 threads the bilayer; that stretch reads IICCVFLLLAIVGYVAVGIIA. Over 55 to 232 the chain is Extracellular; sequence WTHGDPRKVI…RIFEDYTVSW (178 aa). 2 N-linked (GlcNAc...) asparagine glycosylation sites follow: asparagine 187 and asparagine 200. Residues 233–253 traverse the membrane as a helical segment; sequence YWIIIGLVIAMAMSLLFIILL. The Cytoplasmic portion of the chain corresponds to 254 to 256; the sequence is RFL. Residues 257–277 form a helical membrane-spanning segment; the sequence is AGIMVWVMIIMVILVLGYGIF. At 278-315 the chain is on the extracellular side; the sequence is HCYMEYSRLRGEAGSDVSLVDLGFQTDFRVYLHLRQTW. A helical transmembrane segment spans residues 316 to 336; it reads LAFMIILSILEVIIILLLIFL. At 337–364 the chain is on the cytoplasmic side; the sequence is RKRILIAIALIKEASRAVGYVMCSLLYP. A helical membrane pass occupies residues 365-385; it reads LVTFFLLCLCIAYWASTAVFL. Residues 386–457 lie on the Extracellular side of the membrane; the sequence is STSNEAVYKI…FNAFMFFWLA (72 aa). An N-linked (GlcNAc...) asparagine glycan is attached at asparagine 417. A helical transmembrane segment spans residues 458–480; that stretch reads NFVLALGQVTLAGAFASYYWALR. Residues 481-504 lie on the Cytoplasmic side of the membrane; sequence KPDDLPAFPLFSAFGRALRYHTGS. The helical transmembrane segment at 505-525 threads the bilayer; the sequence is LAFGALILAIVQIIRVILEYL. Over 526-563 the chain is Extracellular; it reads DQRLKAAENKFAKCLMTCLKCCFWCLEKFIKFLNRNAY. The chain crosses the membrane as a helical span at residues 564–584; sequence IMIAIYGTNFCTSARNAFFLL. Residues 585–599 are Cytoplasmic-facing; that stretch reads MRNIIRVAVLDKVTD. Residues 600–620 traverse the membrane as a helical segment; the sequence is FLFLLGKLLIVGSVGILAFFF. Over 621–638 the chain is Extracellular; that stretch reads FTHRIRIVQDTAPPLNYY. The chain crosses the membrane as a helical span at residues 639-659; the sequence is WVPILTVIVGSYLIAHGFFSV. Residues 660–706 lie on the Cytoplasmic side of the membrane; the sequence is YGMCVDTLFLCFLEDLERNDGSAERPYFMSSTLKKLLNKTNKKAAES.

This sequence belongs to the CTL (choline transporter-like) family. Interacts with COCH. Present in supporting cells of the inner ear (at protein level). As to expression, expressed in inner ear vestibular tissue.

It is found in the cell membrane. The protein localises to the mitochondrion outer membrane. The catalysed reaction is choline(out) + n H(+)(in) = choline(in) + n H(+)(out). It carries out the reaction ethanolamine(out) + n H(+)(in) = ethanolamine(in) + n H(+)(out). Its function is as follows. Choline/H+ antiporter, mainly in mitochodria. Also acts as a low-affinity ethanolamine/H+ antiporter, regulating the supply of extracellular ethanolamine (Etn) for the CDP-Etn pathway, redistribute intracellular Etn and balance the CDP-Cho and CDP-Etn arms of the Kennedy pathway. Does not exhibit choline transporter activity. The sequence is that of Choline transporter-like protein 2 from Homo sapiens (Human).